The primary structure comprises 396 residues: Aspartate aminotransferase (396 aa).

L-aspartate contacts are provided by Gly34, Trp130, and Asn183. Lys246 carries the N6-(pyridoxal phosphate)lysine modification. Residue Arg374 participates in L-aspartate binding.

It belongs to the class-I pyridoxal-phosphate-dependent aminotransferase family. Homodimer. The cofactor is pyridoxal 5'-phosphate.

The protein resides in the cytoplasm. The enzyme catalyses L-aspartate + 2-oxoglutarate = oxaloacetate + L-glutamate. The sequence is that of Aspartate aminotransferase (aspC) from Escherichia coli (strain K12).